The chain runs to 183 residues: Ribosome maturation factor RimM (183 aa).

Residues 102 to 183 (DDDFYWHQLE…CITVDWDPEF (82 aa)) form the PRC barrel domain.

This sequence belongs to the RimM family. Binds ribosomal protein uS19.

It localises to the cytoplasm. An accessory protein needed during the final step in the assembly of 30S ribosomal subunit, possibly for assembly of the head region. Essential for efficient processing of 16S rRNA. May be needed both before and after RbfA during the maturation of 16S rRNA. It has affinity for free ribosomal 30S subunits but not for 70S ribosomes. This chain is Ribosome maturation factor RimM, found in Saccharophagus degradans (strain 2-40 / ATCC 43961 / DSM 17024).